We begin with the raw amino-acid sequence, 244 residues long: Probable histone-lysine N-methyltransferase set-23 (244 aa).

The 62-residue stretch at 25–86 folds into the Pre-SET domain; sequence EGCNCEAECS…SCRNRVVQCG (62 aa). Zn(2+) is bound by residues C27, C29, C33, C39, C41, C65, C69, C71, and C78. Positions 89–213 constitute an SET domain; sequence KKLEIFSTCE…RGEELCYDYG (125 aa). Residues 101–103, D141, Y143, R170, and 173–174 each bind S-adenosyl-L-methionine; these read KGF and NH. Zn(2+) contacts are provided by C176, C225, C227, and C232. Residues 221–237 enclose the Post-SET domain; that stretch reads NRKLCLCKSEKCRKYLP.

It belongs to the class V-like SAM-binding methyltransferase superfamily. Histone-lysine methyltransferase family. Suvar3-9 subfamily.

Its subcellular location is the nucleus. It is found in the chromosome. The enzyme catalyses L-lysyl-[histone] + S-adenosyl-L-methionine = N(6)-methyl-L-lysyl-[histone] + S-adenosyl-L-homocysteine + H(+). In terms of biological role, probable histone methyltransferase. Required for embryonic development. This is Probable histone-lysine N-methyltransferase set-23 (set-23) from Caenorhabditis elegans.